The following is a 398-amino-acid chain: Pectate lyase 1 (398 aa).

A signal peptide spans 1 to 25 (MGIKHCCYILYFTLALVTLLQPVRS). A glycan (N-linked (GlcNAc...) asparagine) is linked at Asn-37. Cys-55 and Cys-72 are disulfide-bonded. The Ca(2+) site is built by Asp-195, Asp-219, and Asp-223. Arg-275 is a catalytic residue.

Belongs to the polysaccharide lyase 1 family. Amb a subfamily. Monomer. The cofactor is Ca(2+). In terms of processing, the N-terminus is blocked. As to expression, pollen and flowers.

The enzyme catalyses Eliminative cleavage of (1-&gt;4)-alpha-D-galacturonan to give oligosaccharides with 4-deoxy-alpha-D-galact-4-enuronosyl groups at their non-reducing ends.. The protein operates within glycan metabolism; pectin degradation; 2-dehydro-3-deoxy-D-gluconate from pectin: step 2/5. Has pectate lyase activity. The polypeptide is Pectate lyase 1 (Ambrosia artemisiifolia (Common ragweed)).